A 974-amino-acid polypeptide reads, in one-letter code: Villin-4 (974 aa).

6 Gelsolin-like repeats span residues 29–79 (FIPT…DEAG), 150–190 (VHVK…QERA), 262–305 (GQAN…DDRK), 394–451 (LQVW…EERG), 532–572 (MQAI…TDQE), and 634–675 (LKVT…KNKL). The tract at residues 738–783 (VKNGGTPVADKPKRRTPASYGGRASVPDKSQQRSRSMSFSPDRVRV) is disordered. Phosphoserine is present on residues Ser777 and Ser787. 2 disordered regions span residues 801 to 833 (NARN…APKS) and 845 to 930 (KIPP…PVSD). Positions 824-833 (SSKFAPAPKS) are enriched in low complexity. Over residues 872-887 (NSKEQEEKKENDKEEG) the composition is skewed to basic and acidic residues. A compositionally biased stretch (polar residues) spans 888–898 (SMSSRIESLTI). Position 890 is a phosphoserine (Ser890). The region spanning 909–974 (EEDLPAHPYD…NKFKMAVQLF (66 aa)) is the HP domain. Residues 912–921 (LPAHPYDRLK) are compositionally biased toward basic and acidic residues.

This sequence belongs to the villin/gelsolin family. As to expression, preferentially expressed in vegetative tissues. Detected in the whole seedling, hypocotyl, cotyledon, primary root, roots hair cells and trichomes. Expressed in flowers but not in the silique.

It is found in the cytoplasm. Its subcellular location is the cytoskeleton. Functionally, binds actin and actin filament bundles in a Ca(2+)-insensitive manner, but caps the barbed end of actin filaments and is able to sever them in a calcium-dependent manner. Involved in root hair growth through regulating actin organization in a Ca(2+)-dependent manner. This Arabidopsis thaliana (Mouse-ear cress) protein is Villin-4.